The primary structure comprises 1239 residues: Potassium channel subfamily T member 1 (1239 aa).

The segment at 1 to 45 (MARAKLPRSPSEGKAGPGDTPAGSAAPEEPHGLSPLLPTRGGGSV) is disordered. At 1 to 93 (MARAKLPRSP…LFFIKNQRSS (93 aa)) the chain is on the cytoplasmic side. The helical transmembrane segment at 94–126 (LRIRLFNFSLKLLTCLLYIVRVLLDNPDQGIGC) threads the bilayer. Residues 127–153 (WGCTKYNYTFNGSSSEFHWAPILWVER) lie on the Extracellular side of the membrane. 2 N-linked (GlcNAc...) asparagine glycosylation sites follow: Asn-133 and Asn-137. Residues 154–178 (KMALWVIQVIVATISFLETMLLIYL) traverse the membrane as a helical segment. The Cytoplasmic portion of the chain corresponds to 179-192 (SYKGNIWEQIFHVS). A helical membrane pass occupies residues 193–208 (FVLEMINTLPFIITVF). At 209 to 215 (WPPLRNL) the chain is on the extracellular side. A helical membrane pass occupies residues 216 to 233 (FIPVFLNCWLAKHALENM). The Cytoplasmic portion of the chain corresponds to 234-246 (INDFHRAILRTQS). The helical transmembrane segment at 247–274 (AMFNQVLILFCTLLCLVFTGTCGIQHLE) threads the bilayer. At 275–281 (RAGGNLN) the chain is on the extracellular side. The pore-forming intramembrane region spans 282 to 302 (LLTSFYFCIVTFSTVGFGDVT). K(+) contacts are provided by Val-296 and Gly-297. The Extracellular portion of the chain corresponds to 303-304 (PK). Residues 305 to 338 (IWPSQLLVVILICVTLVVLPLQFEELVYLWMERQ) traverse the membrane as a helical segment. Over 339–1239 (KSGGNYSRHR…NPETRDETQL (901 aa)) the chain is Cytoplasmic. Residues 352–488 (EKHVVLCVSS…FHVKFADHVV (137 aa)) form the RCK N-terminal 1 domain. Leu-513, His-516, Ser-538, and Asn-540 together coordinate Na(+). The disordered stretch occupies residues 658-689 (QNTDCRPSQGGSGGGGGKLTLPTENGSGSRRP). Positions 758 and 759 each coordinate Zn(2+). The K(+) site is built by Arg-761 and Lys-764. The Na(+) site is built by Arg-761 and Lys-764. 2 residues coordinate Zn(2+): Cys-766 and His-768. K(+)-binding residues include Asn-769, Tyr-771, Tyr-777, and Gly-778. Residue Tyr-771 participates in Na(+) binding. Phe-779 contacts Na(+). One can recognise an RCK N-terminal 2 domain in the interval 781–921 (NKLIIVSAET…QFRAKDSYSL (141 aa)). Ser-787, Leu-818, Asp-820, Gly-842, and Asp-865 together coordinate K(+). Disordered regions lie at residues 1053–1081 (REAKGPWGTRAASGGGSTHGRHGGSADPV) and 1212–1239 (TSSSQSRKSSCSNKLSSCNPETRDETQL). Positions 1213–1230 (SSSQSRKSSCSNKLSSCN) are enriched in low complexity.

It belongs to the potassium channel family. Calcium-activated (TC 1.A.1.3) subfamily. KCa4.1/KCNT1 sub-subfamily. In terms of assembly, homotetramer; which constitutes the Na(+)-activated K(+) channel. Interacts with KCNT2; these heterodimer channels differ from the homomers in their unitary conductance, kinetic behavior, subcellular localization, and response to activation of protein kinase C. Interacts (via C-terminus) with FMR1; this interaction alters gating properties of KCNT1. Interacts with CRBN via its cytoplasmic C-terminus. Does not interact with KCNT2. Phosphorylated by protein kinase C. Phosphorylation of the C-terminal domain increases channel activity. Detected in brain and brainstem, in vestibular and oculomotor nuclei, the medial nucleus of the trapezoid in the auditory system, in olfactory bulb, red nucleus, and deep cerebellar nuclei. Detected in thalamus, substantia nigra, and amygdala (at protein level). Highly expressed in the brain and kidney.

It is found in the cell membrane. It carries out the reaction K(+)(in) = K(+)(out). With respect to regulation, activated by high intracellular Na(+) level. In addition to activation by Na(+), is cooperatively activated by intracellular Cl(-) levels. Activated upon stimulation of G-protein coupled receptors, such as CHRM1 and GRIA1. In terms of biological role, sodium-activated K(+) channel. Acts as an important mediator of neuronal membrane excitability. Contributes to the delayed outward currents. Regulates neuronal bursting in sensory neurons. Contributes to synaptic development and plasticity. This Rattus norvegicus (Rat) protein is Potassium channel subfamily T member 1 (Kcnt1).